The primary structure comprises 682 residues: Protein SYG1 homolog (682 aa).

In terms of domain architecture, SPX spans 1 to 219; sequence MKFGKVIEGQ…HTDLQGFWVD (219 aa). The Cytoplasmic portion of the chain corresponds to 1 to 274; the sequence is MKFGKVIEGQ…KEHFSANSMR (274 aa). The chain crosses the membrane as a helical span at residues 275–295; sequence FGLLFGAGLPLAIEAACYYNA. The Extracellular segment spans residues 296-300; the sequence is TEQSS. The chain crosses the membrane as a helical span at residues 301-321; sequence YLLQIWGGFFLVIFAFVLFDL. Over 322 to 348 the chain is Cytoplasmic; that stretch reads DCYVWEKTRVNYMLIFEFNQRKSLNWR. The chain crosses the membrane as a helical span at residues 349 to 369; the sequence is QHLEIVGAVFFIFSLFFFLCM. Residues 370 to 377 lie on the Extracellular side of the membrane; it reads RNFFPGFT. A helical transmembrane segment spans residues 378–398; sequence IYFPALFLGVVGTFLIAPVIV. The Cytoplasmic segment spans residues 399–406; it reads PYWRMRRY. A helical transmembrane segment spans residues 407–424; the sequence is LIIQLIRVFLSGLSTVHF. At 425–426 the chain is on the extracellular side; that stretch reads QD. A helical membrane pass occupies residues 427–447; sequence FFFADQMVSLTYACGNISLFF. The Cytoplasmic segment spans residues 448–525; the sequence is CLYKRLWRQP…WRIHPGLKYR (78 aa). The EXS domain maps to 459–654; the sequence is LCNSSHSPLL…VKPHSDVFVS (196 aa). The chain crosses the membrane as a helical span at residues 526 to 546; it reads VLYTIFAGVNSLFSYTWDILM. At 547 to 571 the chain is on the extracellular side; the sequence is DWNLLVRKDGRWQFREHRILKQLWP. Residues 572–592 form a helical membrane-spanning segment; it reads YIIAMILNFIVRSSFIFYCIF. Topologically, residues 593–682 are cytoplasmic; the sequence is PNHIQHSSGI…QTDVDEAQFS (90 aa). The disordered stretch occupies residues 659 to 682; that stretch reads SDKNYTDDEDSMDDQTDVDEAQFS. A compositionally biased stretch (acidic residues) spans 665-682; that stretch reads DDEDSMDDQTDVDEAQFS.

It belongs to the SYG1 (TC 2.A.94) family.

The protein resides in the cell membrane. In terms of biological role, may function in G-protein coupled signal transduction. The chain is Protein SYG1 homolog from Schizosaccharomyces pombe (strain 972 / ATCC 24843) (Fission yeast).